Reading from the N-terminus, the 970-residue chain is Toxin subunit YenC2 (970 aa).

9 RHS repeats span residues 168–182 (AGQC…GLIQ), 297–311 (GVVT…TQRL), 329–343 (LQDL…GNVL), 361–375 (VPEN…YQLV), 408–422 (NYTR…GNLM), 500–514 (DDSE…SQRI), 580–594 (NDQI…TCSS), 606–620 (SMEE…AVWA), and 640–654 (DATG…YYQP). The segment at 610–690 (YYPYGGTAVW…PLRLTDPDGM (81 aa)) is RHS-repeat associated core domain. The interval 849 to 950 (TEAFITGIRS…YNCSGIISGL (102 aa)) is deaminase domain.

It belongs to the RHS family. In terms of assembly, semipurified toxin complex consists of at least YenA1-YenA2-YenB-YenC1-YenC2-Chi1-Chi2. YenB and the N-terminus of YenC2 form a large hollow shell of beta-strands. The shell is closed at both ends, within which the C-terminus of YenC2 is probably found. The C-terminal region dissociates from the YenB-YenC2 complex at pH 4.5 but not 7.5. The Yen-TC:K9 subcomplex is about 26 nm tall and 22 nm in diameter with 5-fold symmetry and 5 copies of YenA1, YenA2, Chi1 and Chi2; the chitinase subunits may be solvent accessible on the exterior the complex. The Yen-TC:K9 subcomplex has no insecticidal activity. The native complex with additional YenB, YenC1 and YenC2 subunits is 16 nm taller and is insecticidal; the toxicity-conferring subunits are present at about 1 copy each.

The protein localises to the secreted. Toxin complex is secreted when grown at 25 degrees Celsius or less; at higher temperatures the proteins are present intracellularly but not secreted. Its function is as follows. Part of an orally active toxin complex (TC) with strong insecticidal effects on larvae of the Coleoptera Costelytra zealandica, Acrossidius tasmania and Adoryphorus couloni and some Lepidoptera larvae. The TC has an endochitinase activity. The sequence is that of Toxin subunit YenC2 from Yersinia entomophaga.